The primary structure comprises 537 residues: Probable feruloyl esterase ARB_07085 (537 aa).

The signal sequence occupies residues 1 to 22 (MVTLPLLLSILPLAAVFSSAAS). N-linked (GlcNAc...) asparagine glycans are attached at residues Asn67, Asn76, and Asn189. Cystine bridges form between Cys196-Cys459, Cys263-Cys280, and Cys508-Cys529. The active-site Acyl-ester intermediate is Ser197. Positions 264, 267, 269, 271, and 273 each coordinate Ca(2+). An N-linked (GlcNAc...) asparagine glycan is attached at Asn339. Residues Asp419 and His458 each act as charge relay system in the active site.

This sequence belongs to the tannase family.

It is found in the secreted. It carries out the reaction feruloyl-polysaccharide + H2O = ferulate + polysaccharide.. Hydrolyzes the feruloyl-arabinose ester bond in arabinoxylans as well as the feruloyl-galactose and feruloyl-arabinose ester bonds. This is Probable feruloyl esterase ARB_07085 from Arthroderma benhamiae (strain ATCC MYA-4681 / CBS 112371) (Trichophyton mentagrophytes).